Consider the following 366-residue polypeptide: Chorismate synthase (366 aa).

Arginine 48 and arginine 54 together coordinate NADP(+). FMN contacts are provided by residues 125-127, 238-239, glycine 278, 293-297, and arginine 319; these read RSS, NA, and KPTSS.

This sequence belongs to the chorismate synthase family. As to quaternary structure, homotetramer. The cofactor is FMNH2.

The enzyme catalyses 5-O-(1-carboxyvinyl)-3-phosphoshikimate = chorismate + phosphate. It functions in the pathway metabolic intermediate biosynthesis; chorismate biosynthesis; chorismate from D-erythrose 4-phosphate and phosphoenolpyruvate: step 7/7. Its function is as follows. Catalyzes the anti-1,4-elimination of the C-3 phosphate and the C-6 proR hydrogen from 5-enolpyruvylshikimate-3-phosphate (EPSP) to yield chorismate, which is the branch point compound that serves as the starting substrate for the three terminal pathways of aromatic amino acid biosynthesis. This reaction introduces a second double bond into the aromatic ring system. This Burkholderia vietnamiensis (strain G4 / LMG 22486) (Burkholderia cepacia (strain R1808)) protein is Chorismate synthase.